The sequence spans 494 residues: Guanosine-5'-triphosphate,3'-diphosphate pyrophosphatase (494 aa).

It belongs to the GppA/Ppx family. GppA subfamily.

The catalysed reaction is guanosine 3'-diphosphate 5'-triphosphate + H2O = guanosine 3',5'-bis(diphosphate) + phosphate + H(+). Its pathway is purine metabolism; ppGpp biosynthesis; ppGpp from GTP: step 2/2. Functionally, catalyzes the conversion of pppGpp to ppGpp. Guanosine pentaphosphate (pppGpp) is a cytoplasmic signaling molecule which together with ppGpp controls the 'stringent response', an adaptive process that allows bacteria to respond to amino acid starvation, resulting in the coordinated regulation of numerous cellular activities. In Shigella dysenteriae serotype 1 (strain Sd197), this protein is Guanosine-5'-triphosphate,3'-diphosphate pyrophosphatase.